The chain runs to 103 residues: c-Myc-binding protein (103 aa).

The protein belongs to the AMY1 family. In terms of assembly, binds via its C-terminal region to the N-terminal region of MYC. Associates with AKAP1/S-AKAP84. Interacts with MYCBPAP. Interacts with CFAP91.

It localises to the cytoplasm. The protein resides in the nucleus. May control the transcriptional activity of MYC. Stimulates the activation of E box-dependent transcription by MYC. This Pongo abelii (Sumatran orangutan) protein is c-Myc-binding protein (MYCBP).